Here is a 467-residue protein sequence, read N- to C-terminus: MDYLPIFCQLQHKACLLVGGGEIAERKARLLLDAGAALTVNACSFTPQFHEWAALGRLTLAAGEFSAELLAEKWLVIAATDRVEVNALVYQCANQQRVFCNVVDDPKRASFIMPSIIDRSPIMVAVSSGGKAPVLARLLREKLEAVLPQHLGKLAQLGGSLRQRVKKHFSDIGSRRRFWEKLFAHDRLAQSLANNDVALAERQIEQLFSHQPQECGEVVLVGAGPGDAGLLTLKGLQQIQQADVVVYDRLVSDEIMTLVRRDAERIFVGKRAGHHCVPQEQINQILLQQAQLGKRVVRLKGGDPFIFGRGGEELETLADANIPFSVVPGITAASGCSAYSGIPLTHRDHAQSVRLVTGHAKSDGGLDWSTLAAGQQTLVFYMGLTQAADIQRQLIAHGMPAATPVALVENGTSCRQRVIEGELSQLGTLALQAASPSLIIVGSVVSLRSKLNWFSSQEPSQPLAQMA.

The precorrin-2 dehydrogenase /sirohydrochlorin ferrochelatase stretch occupies residues 1–204; the sequence is MDYLPIFCQL…NDVALAERQI (204 aa). NAD(+)-binding positions include 22-23 and 43-44; these read EI and CS. Position 128 is a phosphoserine (S128). Positions 216–467 are uroporphyrinogen-III C-methyltransferase; sequence GEVVLVGAGP…EPSQPLAQMA (252 aa). P225 serves as a coordination point for S-adenosyl-L-methionine. The active-site Proton acceptor is the D248. K270 (proton donor) is an active-site residue. Residues 301-303, I306, 331-332, M382, and G411 contribute to the S-adenosyl-L-methionine site; these read GGD and TA.

It in the N-terminal section; belongs to the precorrin-2 dehydrogenase / sirohydrochlorin ferrochelatase family. This sequence in the C-terminal section; belongs to the precorrin methyltransferase family.

The enzyme catalyses uroporphyrinogen III + 2 S-adenosyl-L-methionine = precorrin-2 + 2 S-adenosyl-L-homocysteine + H(+). The catalysed reaction is precorrin-2 + NAD(+) = sirohydrochlorin + NADH + 2 H(+). It catalyses the reaction siroheme + 2 H(+) = sirohydrochlorin + Fe(2+). Its pathway is cofactor biosynthesis; adenosylcobalamin biosynthesis; precorrin-2 from uroporphyrinogen III: step 1/1. It participates in cofactor biosynthesis; adenosylcobalamin biosynthesis; sirohydrochlorin from precorrin-2: step 1/1. The protein operates within porphyrin-containing compound metabolism; siroheme biosynthesis; precorrin-2 from uroporphyrinogen III: step 1/1. It functions in the pathway porphyrin-containing compound metabolism; siroheme biosynthesis; siroheme from sirohydrochlorin: step 1/1. Its pathway is porphyrin-containing compound metabolism; siroheme biosynthesis; sirohydrochlorin from precorrin-2: step 1/1. Its function is as follows. Multifunctional enzyme that catalyzes the SAM-dependent methylations of uroporphyrinogen III at position C-2 and C-7 to form precorrin-2 via precorrin-1. Then it catalyzes the NAD-dependent ring dehydrogenation of precorrin-2 to yield sirohydrochlorin. Finally, it catalyzes the ferrochelation of sirohydrochlorin to yield siroheme. The chain is Siroheme synthase 2 from Serratia proteamaculans (strain 568).